Here is a 332-residue protein sequence, read N- to C-terminus: L-lactate dehydrogenase A chain (332 aa).

NAD(+)-binding positions include 29 to 57 (GAVG…IEDK) and Arg99. Positions 106, 138, and 169 each coordinate substrate. Asn138 is an NAD(+) binding site. His193 (proton acceptor) is an active-site residue. Thr248 lines the substrate pocket.

The protein belongs to the LDH/MDH superfamily. LDH family. In terms of assembly, homotetramer.

The protein resides in the cytoplasm. The catalysed reaction is (S)-lactate + NAD(+) = pyruvate + NADH + H(+). The protein operates within fermentation; pyruvate fermentation to lactate; (S)-lactate from pyruvate: step 1/1. Functionally, interconverts simultaneously and stereospecifically pyruvate and lactate with concomitant interconversion of NADH and NAD(+). The polypeptide is L-lactate dehydrogenase A chain (LDHA) (Sceloporus woodi (Florida scrub lizard)).